The primary structure comprises 529 residues: Bifunctional purine biosynthesis protein PurH (529 aa).

Residues 1–146 (MAPTALLSVS…KNHAHVAVLT (146 aa)) form the MGS-like domain.

The protein belongs to the PurH family.

The enzyme catalyses (6R)-10-formyltetrahydrofolate + 5-amino-1-(5-phospho-beta-D-ribosyl)imidazole-4-carboxamide = 5-formamido-1-(5-phospho-D-ribosyl)imidazole-4-carboxamide + (6S)-5,6,7,8-tetrahydrofolate. The catalysed reaction is IMP + H2O = 5-formamido-1-(5-phospho-D-ribosyl)imidazole-4-carboxamide. Its pathway is purine metabolism; IMP biosynthesis via de novo pathway; 5-formamido-1-(5-phospho-D-ribosyl)imidazole-4-carboxamide from 5-amino-1-(5-phospho-D-ribosyl)imidazole-4-carboxamide (10-formyl THF route): step 1/1. It functions in the pathway purine metabolism; IMP biosynthesis via de novo pathway; IMP from 5-formamido-1-(5-phospho-D-ribosyl)imidazole-4-carboxamide: step 1/1. This is Bifunctional purine biosynthesis protein PurH from Synechococcus sp. (strain CC9311).